A 761-amino-acid polypeptide reads, in one-letter code: Neutral ceramidase (761 aa).

Topologically, residues 1 to 11 (MAKRTFSSLEA) are cytoplasmic. A helical; Signal-anchor for type II membrane protein membrane pass occupies residues 12–32 (FLIFLLVMMTAITVALLTLLF). Over 33 to 761 (VTSGTIENHK…ISSPFEIVTT (729 aa)) the chain is Lumenal. The tract at residues 43–76 (DSGNHWVSTTQGPTTTQSSPTTQTPTTQTPDLPP) is disordered. Low complexity predominate over residues 50 to 76 (STTQGPTTTQSSPTTQTPTTQTPDLPP). O-linked (GalNAc...) threonine glycosylation is found at T51, T52, T56, T57, and T58. O-linked (GalNAc...) serine glycans are attached at residues S60 and S61. Residues T63, T64, T66, T68, T69, and T71 are each glycosylated (O-linked (GalNAc...) threonine). Residue L115 coordinates Ca(2+). Position 175 (H175) interacts with Zn(2+). Residue N198 is glycosylated (N-linked (GlcNAc...) asparagine). H284 is a binding site for Zn(2+). S335 acts as the Nucleophile in catalysis. Cystine bridges form between C343–C357 and C350–C365. N-linked (GlcNAc...) asparagine glycans are attached at residues N412 and N449. C429 and C479 are oxidised to a cystine. Zn(2+) is bound by residues E521 and Y560. The Ca(2+) site is built by D693, S695, and T698. A required for correct folding and localization region spans residues 751-761 (GISSPFEIVTT).

It belongs to the neutral ceramidase family. It depends on Zn(2+) as a cofactor. Proteolytic cleavage of the N-terminus removes the signal-anchor and produces a soluble form of the protein. In terms of processing, N-glycosylated. Required for enzyme activity. Post-translationally, O-glycosylated. Required to retain it as a type II membrane protein at the cell surface. Phosphorylated. May prevent ubiquitination and subsequent degradation. In terms of processing, ubiquitinated, leading to its degradation by the proteasome. Ubiquitination is triggered by nitric oxide. As to expression, highly expressed in brain, kidney and heart. Expressed at lower level in other tissues such as liver. Expressed in intestine, kidney and liver (at protein level). Localizes in the epithelia of the jejunum and ileum.

It localises to the cell membrane. Its subcellular location is the membrane raft. The protein localises to the membrane. It is found in the caveola. The protein resides in the golgi apparatus membrane. It localises to the mitochondrion. Its subcellular location is the secreted. The protein localises to the extracellular exosome. It catalyses the reaction an N-acylsphing-4-enine + H2O = sphing-4-enine + a fatty acid. The enzyme catalyses N-hexadecanoylsphing-4-enine + H2O = sphing-4-enine + hexadecanoate. The catalysed reaction is N-tetradecanoylsphing-4-enine + H2O = tetradecanoate + sphing-4-enine. It carries out the reaction N-(9Z-octadecenoyl)-sphing-4-enine + H2O = sphing-4-enine + (9Z)-octadecenoate. It catalyses the reaction N-(15Z-tetracosenoyl)-sphing-4-enine + H2O = (15Z)-tetracosenoate + sphing-4-enine. The enzyme catalyses N-octanoylsphing-4-enine + H2O = octanoate + sphing-4-enine. The catalysed reaction is N-dodecanoylsphing-4-enine + H2O = dodecanoate + sphing-4-enine. It carries out the reaction N-(hexanoyl)sphing-4-enine + H2O = hexanoate + sphing-4-enine. It catalyses the reaction N-octadecanoylsphing-4-enine + H2O = sphing-4-enine + octadecanoate. The enzyme catalyses sphinganine + hexadecanoate = N-hexadecanoylsphinganine + H2O. The catalysed reaction is N-(octadecanoyl)-sphinganine + H2O = sphinganine + octadecanoate. It functions in the pathway lipid metabolism; sphingolipid metabolism. With respect to regulation, the reverse reaction is inhibited by Zn(2+) and Cu(2+). Inhibited by cardiolipin and phosphatidic acid. Plasma membrane ceramidase that hydrolyzes sphingolipid ceramides into sphingosine and free fatty acids at neutral pH. Ceramides, sphingosine, and its phosphorylated form sphingosine-1-phosphate are bioactive lipids that mediate cellular signaling pathways regulating several biological processes including cell proliferation, apoptosis and differentiation. Also catalyzes the reverse reaction allowing the synthesis of ceramides from fatty acids and sphingosine. Together with sphingomyelinase, participates in the production of sphingosine and sphingosine-1-phosphate from the degradation of sphingomyelin, a sphingolipid enriched in the plasma membrane of cells. Also participates in the hydrolysis of ceramides from the extracellular milieu allowing the production of sphingosine-1-phosphate inside and outside cells. This is the case for instance with the digestion of dietary sphingolipids in the intestinal tract. The polypeptide is Neutral ceramidase (Asah2) (Rattus norvegicus (Rat)).